Consider the following 91-residue polypeptide: MEYEYPIDLDWSNEEMISVINFFNHVEKYYESGVTAGDFMGAYKRFKEIVPAKAEEKQIFNTFEKSSGYNSYKAVQDVKTHSEEQRVTAKK.

Belongs to the UPF0223 family.

The protein is UPF0223 protein SACOL1106 of Staphylococcus aureus (strain COL).